Here is a 206-residue protein sequence, read N- to C-terminus: Thymidylate kinase (206 aa).

Residue 10–17 (GNDGSGKS) coordinates ATP.

The protein belongs to the thymidylate kinase family.

The enzyme catalyses dTMP + ATP = dTDP + ADP. Its function is as follows. Phosphorylation of dTMP to form dTDP in both de novo and salvage pathways of dTTP synthesis. The protein is Thymidylate kinase of Caldicellulosiruptor saccharolyticus (strain ATCC 43494 / DSM 8903 / Tp8T 6331).